Consider the following 378-residue polypeptide: Carbamoyl phosphate synthase small chain (378 aa).

Positions 1–189 (MTKPAILALA…DSHPTIDAAD (189 aa)) are CPSase. Positions 47, 241, and 243 each coordinate L-glutamine. The Glutamine amidotransferase type-1 domain maps to 193–378 (HVVAFDYGVK…RFTDAMAKRR (186 aa)). C269 (nucleophile) is an active-site residue. 5 residues coordinate L-glutamine: L270, Q273, N311, G313, and F314. Active-site residues include H353 and E355.

It belongs to the CarA family. Composed of two chains; the small (or glutamine) chain promotes the hydrolysis of glutamine to ammonia, which is used by the large (or ammonia) chain to synthesize carbamoyl phosphate. Tetramer of heterodimers (alpha,beta)4.

It catalyses the reaction hydrogencarbonate + L-glutamine + 2 ATP + H2O = carbamoyl phosphate + L-glutamate + 2 ADP + phosphate + 2 H(+). The catalysed reaction is L-glutamine + H2O = L-glutamate + NH4(+). The protein operates within amino-acid biosynthesis; L-arginine biosynthesis; carbamoyl phosphate from bicarbonate: step 1/1. It participates in pyrimidine metabolism; UMP biosynthesis via de novo pathway; (S)-dihydroorotate from bicarbonate: step 1/3. In terms of biological role, small subunit of the glutamine-dependent carbamoyl phosphate synthetase (CPSase). CPSase catalyzes the formation of carbamoyl phosphate from the ammonia moiety of glutamine, carbonate, and phosphate donated by ATP, constituting the first step of 2 biosynthetic pathways, one leading to arginine and/or urea and the other to pyrimidine nucleotides. The small subunit (glutamine amidotransferase) binds and cleaves glutamine to supply the large subunit with the substrate ammonia. The sequence is that of Carbamoyl phosphate synthase small chain from Pseudomonas putida (strain ATCC 47054 / DSM 6125 / CFBP 8728 / NCIMB 11950 / KT2440).